The primary structure comprises 377 residues: Uroporphyrinogen decarboxylase (377 aa).

Substrate-binding positions include Arg40–Arg44, Asp89, Tyr169, Ser224, and His354.

Belongs to the uroporphyrinogen decarboxylase family. In terms of assembly, homodimer.

It is found in the cytoplasm. It catalyses the reaction uroporphyrinogen III + 4 H(+) = coproporphyrinogen III + 4 CO2. The protein operates within porphyrin-containing compound metabolism; protoporphyrin-IX biosynthesis; coproporphyrinogen-III from 5-aminolevulinate: step 4/4. Its function is as follows. Catalyzes the decarboxylation of four acetate groups of uroporphyrinogen-III to yield coproporphyrinogen-III. This chain is Uroporphyrinogen decarboxylase, found in Leifsonia xyli subsp. xyli (strain CTCB07).